The primary structure comprises 635 residues: Threonine--tRNA ligase (635 aa).

The region spanning 1 to 61 (MINISFPDGS…DNDCKLRILT (61 aa)) is the TGS domain. Residues 242-533 (DHRKLGRELD…LIEEYAGRFP (292 aa)) form a catalytic region. The Zn(2+) site is built by Cys333, His384, and His510.

The protein belongs to the class-II aminoacyl-tRNA synthetase family. Homodimer. Zn(2+) serves as cofactor.

It localises to the cytoplasm. The enzyme catalyses tRNA(Thr) + L-threonine + ATP = L-threonyl-tRNA(Thr) + AMP + diphosphate + H(+). Its function is as follows. Catalyzes the attachment of threonine to tRNA(Thr) in a two-step reaction: L-threonine is first activated by ATP to form Thr-AMP and then transferred to the acceptor end of tRNA(Thr). Also edits incorrectly charged L-seryl-tRNA(Thr). This Rickettsia africae (strain ESF-5) protein is Threonine--tRNA ligase.